The following is a 660-amino-acid chain: MKTVVFAYHDMGCLGIEALLAAGYEISAIFTHTDNPGEKAFYGSVARLAAERGIPVYAPDNVNHPLWVERIAQLSPEVIFSFYYRHLICDEILQLAPAGAFNLHGSLLPKYRGRAPLNWVLVNGETETGVTLHRMVKRADAGAIVAQLRIAIAPDDIAITLHHKLCHAARQLLEQTLPAIKHGNILEIAQRENEATCFGRRTPEDSFLEWHKPASVLHNMVRAVADPWPGAFSYVGNQKFTVWSSRVHSHAPAAQPGSVISVAPLLIACGDGALEIVTGQAGDGITMQGSQLAQTLGLVQGSRLNSQPACAARRRTRVLILGVNGFIGNHLTERLLREDHYEVYGLDIGSDAISRFLNHPHFHFVEGDISIHSEWIEYHVKKCDVVLPLVAIATPIEYTRNPLRVFELDFEENLRIIRYCVKYRKRIIFPSTSEVYGMCSDKYFDEDHSNLIVGPVNKPRWIYSVSKQLLDRVIWAYGEKEGLQFTLFRPFNWMGPRLDNLNAARIGSSRAITQLILNLVEGSPIKLIDGGKQKRCFTDIRDGIEALYRIIENAGNRCDGEIINIGNPDNEASIEELGEMLLASFEKHPLRHHFPPFAGFRVVESSSYYGKGYQDVEHRKPSIRNARRCLDWEPKIDMQETIDETLDFFLRTVDLTDKPS.

Residues 1 to 304 are formyltransferase ArnAFT; the sequence is MKTVVFAYHD…TLGLVQGSRL (304 aa). Position 86-88 (86-88) interacts with (6R)-10-formyltetrahydrofolate; it reads HLI. Catalysis depends on His104, which acts as the Proton donor; for formyltransferase activity. (6R)-10-formyltetrahydrofolate-binding positions include Arg114 and 136–140; that span reads VKRAD. The dehydrogenase ArnADH stretch occupies residues 314 to 660; the sequence is RRTRVLILGV…RTVDLTDKPS (347 aa). Residues Asp347 and 368–369 each bind NAD(+); that span reads DI. UDP-alpha-D-glucuronate-binding positions include Ala393, Tyr398, and 432 to 433; that span reads TS. The active-site Proton acceptor; for decarboxylase activity is the Glu434. UDP-alpha-D-glucuronate is bound by residues Arg460, Asn492, 526-535, and Tyr613; that span reads KLIDGGKQKR. Arg619 serves as the catalytic Proton donor; for decarboxylase activity.

This sequence in the N-terminal section; belongs to the Fmt family. UDP-L-Ara4N formyltransferase subfamily. In the C-terminal section; belongs to the NAD(P)-dependent epimerase/dehydratase family. UDP-glucuronic acid decarboxylase subfamily. Homohexamer, formed by a dimer of trimers.

It carries out the reaction UDP-alpha-D-glucuronate + NAD(+) = UDP-beta-L-threo-pentopyranos-4-ulose + CO2 + NADH. The enzyme catalyses UDP-4-amino-4-deoxy-beta-L-arabinose + (6R)-10-formyltetrahydrofolate = UDP-4-deoxy-4-formamido-beta-L-arabinose + (6S)-5,6,7,8-tetrahydrofolate + H(+). It functions in the pathway nucleotide-sugar biosynthesis; UDP-4-deoxy-4-formamido-beta-L-arabinose biosynthesis; UDP-4-deoxy-4-formamido-beta-L-arabinose from UDP-alpha-D-glucuronate: step 1/3. Its pathway is nucleotide-sugar biosynthesis; UDP-4-deoxy-4-formamido-beta-L-arabinose biosynthesis; UDP-4-deoxy-4-formamido-beta-L-arabinose from UDP-alpha-D-glucuronate: step 3/3. It participates in bacterial outer membrane biogenesis; lipopolysaccharide biosynthesis. In terms of biological role, bifunctional enzyme that catalyzes the oxidative decarboxylation of UDP-glucuronic acid (UDP-GlcUA) to UDP-4-keto-arabinose (UDP-Ara4O) and the addition of a formyl group to UDP-4-amino-4-deoxy-L-arabinose (UDP-L-Ara4N) to form UDP-L-4-formamido-arabinose (UDP-L-Ara4FN). The modified arabinose is attached to lipid A and is required for resistance to polymyxin and cationic antimicrobial peptides. The polypeptide is Bifunctional polymyxin resistance protein ArnA (Escherichia coli O17:K52:H18 (strain UMN026 / ExPEC)).